Consider the following 181-residue polypeptide: Ribosome maturation factor RimM (181 aa).

The PRC barrel domain occupies 98–177; that stretch reads EGEFFYCDLI…KITTHNAKTL (80 aa).

Belongs to the RimM family. As to quaternary structure, binds ribosomal protein uS19.

It is found in the cytoplasm. Its function is as follows. An accessory protein needed during the final step in the assembly of 30S ribosomal subunit, possibly for assembly of the head region. Essential for efficient processing of 16S rRNA. May be needed both before and after RbfA during the maturation of 16S rRNA. It has affinity for free ribosomal 30S subunits but not for 70S ribosomes. In Helicobacter pylori (strain J99 / ATCC 700824) (Campylobacter pylori J99), this protein is Ribosome maturation factor RimM.